A 133-amino-acid chain; its full sequence is Small ribosomal subunit protein uS11 (133 aa).

This sequence belongs to the universal ribosomal protein uS11 family. As to quaternary structure, part of the 30S ribosomal subunit. Interacts with proteins S7 and S18. Binds to IF-3.

In terms of biological role, located on the platform of the 30S subunit, it bridges several disparate RNA helices of the 16S rRNA. Forms part of the Shine-Dalgarno cleft in the 70S ribosome. This is Small ribosomal subunit protein uS11 from Ralstonia nicotianae (strain ATCC BAA-1114 / GMI1000) (Ralstonia solanacearum).